The following is a 217-amino-acid chain: Small ribosomal subunit protein uS3 (217 aa).

The KH type-2 domain occupies 38–106; sequence VRKYIETALK…RVHINIIEIK (69 aa).

The protein belongs to the universal ribosomal protein uS3 family. In terms of assembly, part of the 30S ribosomal subunit. Forms a tight complex with proteins S10 and S14.

Functionally, binds the lower part of the 30S subunit head. Binds mRNA in the 70S ribosome, positioning it for translation. The protein is Small ribosomal subunit protein uS3 of Lysinibacillus sphaericus (strain C3-41).